A 561-amino-acid polypeptide reads, in one-letter code: Cloacin (561 aa).

Gly residues-rich tracts occupy residues 1–21 (MSGG…GGQA), 29–40 (SGKGGPSSGGGT), and 66–91 (FGNG…GGGQ). 5 disordered regions span residues 1–93 (MSGG…GQSS), 254–273 (PKGI…TAGG), 304–326 (VKQR…PEEG), 432–507 (KAAL…KRAR), and 530–561 (RASD…KKYL). Residues 1-180 (MSGGDGRGPG…DTVTETPAST (180 aa)) are involved in the translocation of the protein across the cell membrane. Positions 200–420 (DERQHIAVVA…NAKLKAAQAS (221 aa)) are responsible for the receptor binding activity. 2 stretches are compositionally biased toward basic and acidic residues: residues 306 to 326 (QRQE…PEEG) and 440 to 494 (ESRK…EGKP). The tract at residues 421–561 (LNAMNDALSR…DPKRNIKKYL (141 aa)) is ribonuclease activity. The segment at 540–561 (FDPKTGKQVKGPDPKRNIKKYL) is binding of immunity protein.

Belongs to the cloacin colicin family.

Its function is as follows. Inactivates ribosomes by hydrolyzing 16S RNA in 30S ribosomes at a specific site. Functionally, colicins are polypeptide toxins produced by and active against E.coli and closely related bacteria. This is Cloacin (ccl) from Escherichia coli.